An 880-amino-acid chain; its full sequence is Valine--tRNA ligase (880 aa).

The 'HIGH' region signature appears at 51–61 (PNVTGELHLGH). Positions 529–533 (KMSKT) match the 'KMSKS' region motif. Lysine 532 serves as a coordination point for ATP. Residues 815–854 (MSTMVDLEAEAKRVEAEIAELETQIERLSARLSDTQFLAK) adopt a coiled-coil conformation.

Belongs to the class-I aminoacyl-tRNA synthetase family. ValS type 1 subfamily. Monomer.

It localises to the cytoplasm. It catalyses the reaction tRNA(Val) + L-valine + ATP = L-valyl-tRNA(Val) + AMP + diphosphate. Catalyzes the attachment of valine to tRNA(Val). As ValRS can inadvertently accommodate and process structurally similar amino acids such as threonine, to avoid such errors, it has a 'posttransfer' editing activity that hydrolyzes mischarged Thr-tRNA(Val) in a tRNA-dependent manner. The sequence is that of Valine--tRNA ligase from Dehalococcoides mccartyi (strain ATCC BAA-2266 / KCTC 15142 / 195) (Dehalococcoides ethenogenes (strain 195)).